The primary structure comprises 256 residues: L-rhamnose 1-dehydrogenase (NAD(P)(+)) (256 aa).

Residues G12, S14, R15, I17, S37, D66, A67, and N93 each contribute to the NADP(+) site. S146 acts as the Proton donor in catalysis. Residues S146, S148, Q156, and Y159 each contribute to the beta-L-rhamnose site. NADP(+) contacts are provided by Y159 and K163. Y159 acts as the Proton acceptor in catalysis. Residue K163 is the Lowers pKa of active site Tyr of the active site. Position 191 (T191) interacts with beta-L-rhamnose. I192 contacts NADP(+). N197 provides a ligand contact to beta-L-rhamnose.

This sequence belongs to the short-chain dehydrogenases/reductases (SDR) family.

The enzyme catalyses L-rhamnofuranose + NAD(+) = L-rhamnono-1,4-lactone + NADH + H(+). The catalysed reaction is L-rhamnofuranose + NADP(+) = L-rhamnono-1,4-lactone + NADPH + H(+). Its pathway is carbohydrate degradation; L-rhamnose degradation. In terms of biological role, NAD(P)-dependent dehydrogenase that catalyzes the oxidation of L-rhamnose to L-rhamnono-1,4-lactone. Also shows high activity with L-lyxose and low activity with L-mannose and L-fucose. Can utilize either NAD(+) or NADP(+), with a strong preference for NADP(+). Catalyzes the first step in an alternative pathway for rhamnose utilization that does not involve phosphorylated intermediates. The protein is L-rhamnose 1-dehydrogenase (NAD(P)(+)) of Azotobacter vinelandii (strain DJ / ATCC BAA-1303).